A 365-amino-acid chain; its full sequence is Ribosomal RNA large subunit methyltransferase M (365 aa).

S-adenosyl-L-methionine-binding positions include serine 188, 221 to 224, aspartate 240, aspartate 260, and aspartate 277; that span reads CPGG. The active-site Proton acceptor is lysine 306.

It belongs to the class I-like SAM-binding methyltransferase superfamily. RNA methyltransferase RlmE family. RlmM subfamily. As to quaternary structure, monomer.

The protein resides in the cytoplasm. The enzyme catalyses cytidine(2498) in 23S rRNA + S-adenosyl-L-methionine = 2'-O-methylcytidine(2498) in 23S rRNA + S-adenosyl-L-homocysteine + H(+). Its function is as follows. Catalyzes the 2'-O-methylation at nucleotide C2498 in 23S rRNA. The polypeptide is Ribosomal RNA large subunit methyltransferase M (Proteus mirabilis (strain HI4320)).